A 296-amino-acid chain; its full sequence is Glycine and tyrosine-rich protein (296 aa).

Residues 1 to 18 (MKVLVTALIISFSTAVLT) form the signal peptide. Positions 157-280 (MESRLRPQAT…NQPEETPAPN (124 aa)) are disordered. Positions 172–264 (TGGQPSTGGK…STGGQPSTGG (93 aa)) are enriched in low complexity.

In terms of tissue distribution, component of the acid-insoluble and acid-soluble organic matrix of calcified layers of the shell (at protein level).

It is found in the secreted. In Lottia gigantea (Giant owl limpet), this protein is Glycine and tyrosine-rich protein.